A 293-amino-acid polypeptide reads, in one-letter code: Meteorin (293 aa).

The first 23 residues, M1–A23, serve as a signal peptide directing secretion. Disulfide bonds link C30–C51, C82–C118, C171–C242, C174–C266, and C184–C288.

The protein belongs to the meteorin family. In terms of assembly, monomer.

Its subcellular location is the secreted. Its function is as follows. Involved in both glial cell differentiation and axonal network formation during neurogenesis. Promotes astrocyte differentiation and transforms cerebellar astrocytes into radial glia. Also induces axonal extension in small and intermediate neurons of sensory ganglia by activating nearby satellite glia. This chain is Meteorin (METRN), found in Homo sapiens (Human).